The chain runs to 405 residues: Arginine biosynthesis bifunctional protein ArgJ (405 aa).

Substrate is bound by residues Thr152, Lys178, Thr189, Glu276, Asn400, and Thr405. Thr189 acts as the Nucleophile in catalysis.

This sequence belongs to the ArgJ family. In terms of assembly, heterotetramer of two alpha and two beta chains.

Its subcellular location is the cytoplasm. It catalyses the reaction N(2)-acetyl-L-ornithine + L-glutamate = N-acetyl-L-glutamate + L-ornithine. It carries out the reaction L-glutamate + acetyl-CoA = N-acetyl-L-glutamate + CoA + H(+). The protein operates within amino-acid biosynthesis; L-arginine biosynthesis; L-ornithine and N-acetyl-L-glutamate from L-glutamate and N(2)-acetyl-L-ornithine (cyclic): step 1/1. It functions in the pathway amino-acid biosynthesis; L-arginine biosynthesis; N(2)-acetyl-L-ornithine from L-glutamate: step 1/4. Functionally, catalyzes two activities which are involved in the cyclic version of arginine biosynthesis: the synthesis of N-acetylglutamate from glutamate and acetyl-CoA as the acetyl donor, and of ornithine by transacetylation between N(2)-acetylornithine and glutamate. The sequence is that of Arginine biosynthesis bifunctional protein ArgJ from Pseudomonas aeruginosa (strain ATCC 15692 / DSM 22644 / CIP 104116 / JCM 14847 / LMG 12228 / 1C / PRS 101 / PAO1).